We begin with the raw amino-acid sequence, 217 residues long: MSSTALKSGKISAYAAVKVDPDGDYCTPGAFDLERLFWKGSPKYTHVNEVWPNLYIGDEKTALDRYSLEKAGFTHILNAAHGRWNVDTGPEYYSDMNIEYHGVEADDLPTFNLSPFFYSAAEFIHTALQNETSKILVHCAMGRSRSAALVLAYLMIYKNMTVVDAIDQVLQHRCILPNRGFLKQLRELDIKLALERRDNMNGTNSSEKTGTSTETEI.

Residues histidine 46–leucine 194 form the Tyrosine-protein phosphatase domain. Position 138 to 145 (histidine 138 to arginine 145) interacts with substrate. Cysteine 139 acts as the Phosphocysteine intermediate in catalysis.

This sequence belongs to the protein-tyrosine phosphatase family. Non-receptor class dual specificity subfamily.

The protein localises to the cytoplasm. Its subcellular location is the nucleus. It catalyses the reaction O-phospho-L-tyrosyl-[protein] + H2O = L-tyrosyl-[protein] + phosphate. The enzyme catalyses O-phospho-L-seryl-[protein] + H2O = L-seryl-[protein] + phosphate. It carries out the reaction O-phospho-L-threonyl-[protein] + H2O = L-threonyl-[protein] + phosphate. Functionally, dual specificity phosphatase able to dephosphorylate phosphotyrosine, phosphoserine and phosphothreonine residues within the same substrate, with a preference for phosphotyrosine as a substrate. Involved in the modulation of AMPK and MAPK1/2 signaling pathways. The chain is Dual specificity phosphatase 29 (DUSP29) from Anolis carolinensis (Green anole).